The chain runs to 430 residues: D-galactonate transporter (430 aa).

Residues 1–17 (MDIPVNAAKPGRRRYLT) lie on the Cytoplasmic side of the membrane. A helical transmembrane segment spans residues 18–39 (LVMIFITVVICYVDRANLAVAS). Residues Y29 and R32 each contribute to the D-galactonate site. Topologically, residues 40-50 (AHIQEEFGITK) are periplasmic. A helical membrane pass occupies residues 51-74 (AEMGYVFSAFAWLYTLCQIPGGWF). Y64 is a D-galactonate binding site. Residues 75-81 (LDRVGSR) lie on the Cytoplasmic side of the membrane. The chain crosses the membrane as a helical span at residues 82 to 100 (VTYFIAIFGWSVATLFQGF). At 101-103 (ATG) the chain is on the periplasmic side. Residues 104–125 (LMSLIGLRAITGIFEAPAFPTN) form a helical membrane-spanning segment. Over 126–141 (NRMVTSWFPEHERASA) the chain is Cytoplasmic. A helical transmembrane segment spans residues 142-164 (VGFYTSGQFVGLAFLTPLLIWIQ). At 165–168 (EMLS) the chain is on the periplasmic side. Residues 169–190 (WHWVFIVTGGIGIIWSLIWFKV) form a helical membrane-spanning segment. At 191–241 (YQPPRLTKGISKAELDYIRDGGGLVDGDAPVKKEARQPLTAKDWKLVFHRK) the chain is on the cytoplasmic side. A helical transmembrane segment spans residues 242–267 (LIGVYLGQFAVASTLWFFLTWFPNYL). The Periplasmic segment spans residues 268–276 (TQEKGITAL). Residues 277 to 297 (KAGFMTTVPFLAAFVGVLLSG) traverse the membrane as a helical segment. Over 298 to 314 (WVADLLVRKGFSLGFAR) the chain is Cytoplasmic. A helical membrane pass occupies residues 315–333 (KTPIICGLLISTCIMGANY). Topologically, residues 334 to 336 (TND) are periplasmic. Residues 337–354 (PMMIMCLMALAFFGNGFA) form a helical membrane-spanning segment. The Cytoplasmic portion of the chain corresponds to 355–373 (SITWSLVSSLAPMRLIGLT). W358 provides a ligand contact to D-galactonate. Residues 374-395 (GGVFNFAGGLGGITVPLVVGYL) traverse the membrane as a helical segment. Over 396-400 (AQGYG) the chain is Periplasmic. A helical membrane pass occupies residues 401 to 423 (FAPALVYISAVALIGALSYILLV). At 424–430 (GDVKRVG) the chain is on the cytoplasmic side.

Belongs to the major facilitator superfamily. Phthalate permease family.

The protein resides in the cell inner membrane. The catalysed reaction is D-galactonate(in) + H(+)(in) = D-galactonate(out) + H(+)(out). Functionally, involved in D-galactonate metabolism. Catalyzes the proton-dependent uptake of galactonate into the cell. In Escherichia coli O6:H1 (strain CFT073 / ATCC 700928 / UPEC), this protein is D-galactonate transporter (dgoT).